Here is a 314-residue protein sequence, read N- to C-terminus: Ornithine carbamoyltransferase (314 aa).

Residues 58 to 61 (STRT), Q85, R109, and 136 to 139 (HPAQ) each bind carbamoyl phosphate. L-ornithine contacts are provided by residues N169, D233, and 237 to 238 (SM). Carbamoyl phosphate is bound by residues 273-274 (CL) and R301.

It belongs to the aspartate/ornithine carbamoyltransferase superfamily. OTCase family.

The protein localises to the cytoplasm. It catalyses the reaction carbamoyl phosphate + L-ornithine = L-citrulline + phosphate + H(+). It functions in the pathway amino-acid degradation; L-arginine degradation via ADI pathway; carbamoyl phosphate from L-arginine: step 2/2. In terms of biological role, reversibly catalyzes the transfer of the carbamoyl group from carbamoyl phosphate (CP) to the N(epsilon) atom of ornithine (ORN) to produce L-citrulline. This is Ornithine carbamoyltransferase from Staphylothermus marinus (strain ATCC 43588 / DSM 3639 / JCM 9404 / F1).